A 366-amino-acid chain; its full sequence is Dual-specificity RNA methyltransferase RlmN (366 aa).

E102 serves as the catalytic Proton acceptor. The 233-residue stretch at 108 to 340 folds into the Radical SAM core domain; it reads DEGRNTLCVS…TTTRKTRGRD (233 aa). C115 and C345 are joined by a disulfide. The [4Fe-4S] cluster site is built by C122, C126, and C129. S-adenosyl-L-methionine contacts are provided by residues 171 to 172, S203, 225 to 227, and N302; these read GE and SLH. The S-methylcysteine intermediate role is filled by C345.

It belongs to the radical SAM superfamily. RlmN family. [4Fe-4S] cluster is required as a cofactor.

It localises to the cytoplasm. The catalysed reaction is adenosine(2503) in 23S rRNA + 2 reduced [2Fe-2S]-[ferredoxin] + 2 S-adenosyl-L-methionine = 2-methyladenosine(2503) in 23S rRNA + 5'-deoxyadenosine + L-methionine + 2 oxidized [2Fe-2S]-[ferredoxin] + S-adenosyl-L-homocysteine. The enzyme catalyses adenosine(37) in tRNA + 2 reduced [2Fe-2S]-[ferredoxin] + 2 S-adenosyl-L-methionine = 2-methyladenosine(37) in tRNA + 5'-deoxyadenosine + L-methionine + 2 oxidized [2Fe-2S]-[ferredoxin] + S-adenosyl-L-homocysteine. Functionally, specifically methylates position 2 of adenine 2503 in 23S rRNA and position 2 of adenine 37 in tRNAs. m2A2503 modification seems to play a crucial role in the proofreading step occurring at the peptidyl transferase center and thus would serve to optimize ribosomal fidelity. This chain is Dual-specificity RNA methyltransferase RlmN, found in Methylococcus capsulatus (strain ATCC 33009 / NCIMB 11132 / Bath).